Consider the following 965-residue polypeptide: Argonaute protein wago-4 (965 aa).

Residues 1–34 form a disordered region; it reads MPALPPVYTPSGAPSSVHAPPAVPPVPVPTQPLR. The span at 10–20 shows a compositional bias: low complexity; it reads PSGAPSSVHAP. A compositionally biased stretch (pro residues) spans 21-30; that stretch reads PAVPPVPVPT. The 111-residue stretch at 318 to 428 folds into the PAZ domain; it reads PILDKLKEIT…YPMELLKISS (111 aa). Residues 594 to 924 form the Piwi domain; the sequence is TFVFIITDDS…YAKRGRNLWN (331 aa).

This sequence belongs to the argonaute family. WAGO subfamily. Interacts with znfx-1; the interaction promotes the transmission of epigenetic information across generations. May interact with mina-1. As to expression, expressed in the hermaphrodite germline and in oocytes. Expressed at a low level in the male germline. Not expressed in the soma of hermaphrodites or males.

The protein resides in the cytoplasm. The protein localises to the perinuclear region. It is found in the cytoplasmic granule. Argonaute protein which is involved in the endogenous small interfering RNA (endo-siRNA) pathway and is required for RNA-mediated gene silencing (RNAi) in the germline. Interacts with secondary 22G-RNAs, which are RNA-dependent RNA polymerase-derived endo-siRNAs, typically 22 nucleotides in length with a 5'guanosine residue. Also interacts with the mRNA targets of 22G-RNAs. Associates with znfx-1 to mediate small RNA-directed transgenerational epigenetic inheritance of both germline- and soma-expressed genes. The chain is Argonaute protein wago-4 from Caenorhabditis elegans.